The following is a 117-amino-acid chain: Eukaryotic translation initiation factor 4E-binding protein 1 (117 aa).

2 stretches are compositionally biased toward polar residues: residues 1-12 and 33-47; these read MSAGSSCSQTPS and YSTT…TTPG. The segment at 1–47 is disordered; it reads MSAGSSCSQTPSRAIPTRRVALGDGVQLPPGDYSTTPGGTLFSTTPG. S2 is modified (N-acetylserine). A phosphothreonine mark is found at T36 and T40. The residue at position 43 (S43) is a Phosphoserine. T45 and T49 each carry phosphothreonine. At Y53 the chain carries Phosphotyrosine. The YXXXXLphi motif motif lies at 53 to 59; sequence YDRKFLM. K56 participates in a covalent cross-link: Glycyl lysine isopeptide (Lys-Gly) (interchain with G-Cter in ubiquitin). At S64 the chain carries Phosphoserine. The segment at 64 to 117 is disordered; the sequence is SPVAKTPPKDLPAIPGVTSPTSDEPPMQASQSQLPSSPEDKRAGGEESQFEMDI. T69 bears the Phosphothreonine mark. Over residues 81–99 the composition is skewed to polar residues; sequence TSPTSDEPPMQASQSQLPS. S82, S95, S99, S100, and S111 each carry phosphoserine. The short motif at 113-117 is the TOS motif element; it reads FEMDI.

The protein belongs to the eIF4E-binding protein family. Hypophosphorylated EIF4EBP1 competes with EIF4G1/EIF4G3 to interact with EIF4E; insulin stimulated MAP-kinase (MAPK1 and MAPK3) or mTORC1 phosphorylation of EIF4EBP1 causes dissociation of the complex allowing EIF4G1/EIF4G3 to bind and consequent initiation of translation. Interacts (via TOS motif) with RPTOR; promoting phosphorylation by mTORC1. Post-translationally, phosphorylated on serine and threonine residues in response to insulin, EGF and PDGF. Phosphorylation at Thr-36, Thr-45, Ser-64 and Thr-69, corresponding to the hyperphosphorylated form, is regulated by mTORC1 and abolishes binding to EIF4E. In terms of processing, ubiquitinated: when eIF4E levels are low, hypophosphorylated form is ubiquitinated by the BCR(KLHL25) complex, leading to its degradation and serving as a homeostatic mechanism to maintain translation and prevent eIF4E inhibition when eIF4E levels are low. Not ubiquitinated when hyperphosphorylated (at Thr-36, Thr-45, Ser-64 and Thr-69) or associated with eIF4E. Highest expression in fat cells.

Its subcellular location is the cytoplasm. The protein localises to the nucleus. Its function is as follows. Repressor of translation initiation that regulates EIF4E activity by preventing its assembly into the eIF4F complex: hypophosphorylated form competes with EIF4G1/EIF4G3 and strongly binds to EIF4E, leading to repress translation. In contrast, hyperphosphorylated form dissociates from EIF4E, allowing interaction between EIF4G1/EIF4G3 and EIF4E, leading to initiation of translation. Mediates the regulation of protein translation by hormones, growth factors and other stimuli that signal through the MAP kinase and mTORC1 pathways. This Mus musculus (Mouse) protein is Eukaryotic translation initiation factor 4E-binding protein 1 (Eif4ebp1).